A 315-amino-acid chain; its full sequence is Methionine import ATP-binding protein MetN (315 aa).

Residues 2 to 219 form the ABC transporter domain; it reads IEIEKVCVDF…PQHAFTQQLV (218 aa). 16–23 is a binding site for ATP; sequence GTSGAGKS.

The protein belongs to the ABC transporter superfamily. Methionine importer (TC 3.A.1.24) family. As to quaternary structure, the complex is composed of two ATP-binding proteins (MetN), two transmembrane proteins (MetI) and a solute-binding protein (MetQ).

It localises to the cell inner membrane. The catalysed reaction is L-methionine(out) + ATP + H2O = L-methionine(in) + ADP + phosphate + H(+). It catalyses the reaction D-methionine(out) + ATP + H2O = D-methionine(in) + ADP + phosphate + H(+). Part of the ABC transporter complex MetNIQ involved in methionine import. Responsible for energy coupling to the transport system. This is Methionine import ATP-binding protein MetN from Salmonella enteritidis.